The sequence spans 458 residues: MSLPVSPSIFTVSRLNQTVRQLLEMEMGQIWLSAEISNFSQPSSGHWYFTLKDDRAQVRCAMFRNTNRRTTFRPQNGQQVLVRASITLYEPRGDYQLIAESMQPAGDGLLQQQFDQLKQRLSAEGLFDQQFKQPLPSPAKRVGVITSASGAALHDVLQVLQRRDPSLPIIIYPTSVQGAEAPLQIVRAIETANRRDECDVLIVGRGGGSLEDLWSFNDERVARAIFASRIPIVSAVGHETDVTIADFVADLRAPTPSAAAELVSRNQLELLRQLQSQQQRMEMAMDYYLAQRQQQFTRINHRLQQQHPHLRLARQQTLLFKLQRRLEDGMQNQLRLSSRRSERAQQRLAQMQPQARIHRYQQRVQQQEYRLQQALERQLNAWRQRFGVACSQLEAVSPLATLARGYSVTQTPRGELLKTTKQAQVGELLKTRLQDGWVESEVKTITLAKKPRKKRAAE.

It belongs to the XseA family. Heterooligomer composed of large and small subunits.

Its subcellular location is the cytoplasm. The catalysed reaction is Exonucleolytic cleavage in either 5'- to 3'- or 3'- to 5'-direction to yield nucleoside 5'-phosphates.. Functionally, bidirectionally degrades single-stranded DNA into large acid-insoluble oligonucleotides, which are then degraded further into small acid-soluble oligonucleotides. This Serratia proteamaculans (strain 568) protein is Exodeoxyribonuclease 7 large subunit.